An 83-amino-acid chain; its full sequence is Hainantoxin-III 4 (83 aa).

Positions 1-21 (MKASMYLALAGLVLLFVVGYA) are cleaved as a signal peptide. The propeptide occupies 22-48 (SESEEKEFPRELLSKIFAVDDFKGKER). 3 cysteine pairs are disulfide-bonded: Cys50-Cys65, Cys57-Cys70, and Cys64-Cys77. Leu81 is modified (leucine amide).

This sequence belongs to the neurotoxin 10 (Hwtx-1) family. 15 (Hntx-3) subfamily. In terms of assembly, monomer. In terms of tissue distribution, expressed by the venom gland.

It is found in the secreted. Functionally, selective antagonist of neuronal tetrodotoxin (TTX)-sensitive voltage-gated sodium channels (IC(50)=1270 nM on Nav1.1/SCN1A, 270 nM on Nav1.2/SCN2A, 491 nM on Nav1.3/SCN3A and 232 nM on Nav1.7/SCN9A). This toxin suppress Nav1.7 current amplitude without significantly altering the activation, inactivation, and repriming kinetics. Short extreme depolarizations partially activate the toxin-bound channel, indicating voltage-dependent inhibition of this toxin. This toxin increases the deactivation of the Nav1.7 current after extreme depolarizations. The toxin-Nav1.7 complex is gradually dissociated upon prolonged strong depolarizations in a voltage-dependent manner, and the unbound toxin rebinds to Nav1.7 after a long repolarization. Moreover, analysis of chimeric channels showed that the DIIS3-S4 linker is critical for toxin binding to Nav1.7. These data are consistent with this toxin interacting with Nav1.7 site 4 and trapping the domain II voltage sensor in the closed state. This Cyriopagopus hainanus (Chinese bird spider) protein is Hainantoxin-III 4.